We begin with the raw amino-acid sequence, 1124 residues long: MGWWIFEFKKESKSMFVGVLFLLTLLVWTSESLNSDGQFLLELKNRGFQDSLNRLHNWNGIDETPCNWIGVNCSSQGSSSSSNSLVVTSLDLSSMNLSGIVSPSIGGLVNLVYLNLAYNALTGDIPREIGNCSKLEVMFLNNNQFGGSIPVEINKLSQLRSFNICNNKLSGPLPEEIGDLYNLEELVAYTNNLTGPLPRSLGNLNKLTTFRAGQNDFSGNIPTEIGKCLNLKLLGLAQNFISGELPKEIGMLVKLQEVILWQNKFSGFIPKDIGNLTSLETLALYGNSLVGPIPSEIGNMKSLKKLYLYQNQLNGTIPKELGKLSKVMEIDFSENLLSGEIPVELSKISELRLLYLFQNKLTGIIPNELSKLRNLAKLDLSINSLTGPIPPGFQNLTSMRQLQLFHNSLSGVIPQGLGLYSPLWVVDFSENQLSGKIPPFICQQSNLILLNLGSNRIFGNIPPGVLRCKSLLQLRVVGNRLTGQFPTELCKLVNLSAIELDQNRFSGPLPPEIGTCQKLQRLHLAANQFSSNLPNEISKLSNLVTFNVSSNSLTGPIPSEIANCKMLQRLDLSRNSFIGSLPPELGSLHQLEILRLSENRFSGNIPFTIGNLTHLTELQMGGNLFSGSIPPQLGLLSSLQIAMNLSYNDFSGEIPPEIGNLHLLMYLSLNNNHLSGEIPTTFENLSSLLGCNFSYNNLTGQLPHTQIFQNMTLTSFLGNKGLCGGHLRSCDPSHSSWPHISSLKAGSARRGRIIIIVSSVIGGISLLLIAIVVHFLRNPVEPTAPYVHDKEPFFQESDIYFVPKERFTVKDILEATKGFHDSYIVGRGACGTVYKAVMPSGKTIAVKKLESNREGNNNNSNNTDNSFRAEILTLGKIRHRNIVRLYSFCYHQGSNSNLLLYEYMSRGSLGELLHGGKSHSMDWPTRFAIALGAAEGLAYLHHDCKPRIIHRDIKSNNILIDENFEAHVGDFGLAKVIDMPLSKSVSAVAGSYGYIAPEYAYTMKVTEKCDIYSFGVVLLELLTGKAPVQPLEQGGDLATWTRNHIRDHSLTSEILDPYLTKVEDDVILNHMITVTKIAVLCTKSSPSDRPTMREVVLMLIESGERAGKVIVSTTCSDLPPPAPP.

Residues 1–32 form the signal peptide; sequence MGWWIFEFKKESKSMFVGVLFLLTLLVWTSES. At 33–752 the chain is on the extracellular side; that stretch reads LNSDGQFLLE…LKAGSARRGR (720 aa). N-linked (GlcNAc...) asparagine glycans are attached at residues asparagine 72, asparagine 96, and asparagine 131. 26 LRR repeats span residues 86-109, 110-132, 134-156, 158-180, 182-205, 206-228, 230-252, 254-277, 278-300, 302-325, 326-348, 350-371, 374-397, 398-420, 422-444, 446-468, 470-491, 494-516, 518-540, 542-564, 566-588, 590-613, 614-636, 638-661, 663-686, and 687-709; these read VVTS…GGLV, NLVY…IGNC, KLEV…INKL, QLRS…IGDL, NLEE…GNLN, KLTT…IGKC, NLKL…IGML, KLQE…GNLT, SLET…IGNM, SLKK…GKLS, KVME…LSKI, ELRL…ELSK, NLAK…QNLT, SMRQ…LGLY, PLWV…ICQQ, NLIL…VLRC, SLLQ…ELCK, NLSA…IGTC, KLQR…ISKL, NLVT…IANC, MLQR…LGSL, QLEI…GNLT, HLTE…LGLL, SLQI…IGNL, LLMY…ENLS, and SLLG…QIFQ. Residue asparagine 192 is glycosylated (N-linked (GlcNAc...) asparagine). An N-linked (GlcNAc...) asparagine glycan is attached at asparagine 275. The N-linked (GlcNAc...) asparagine glycan is linked to asparagine 314. Asparagine 395 carries an N-linked (GlcNAc...) asparagine glycan. N-linked (GlcNAc...) asparagine glycosylation is present at asparagine 494. Residue asparagine 547 is glycosylated (N-linked (GlcNAc...) asparagine). N-linked (GlcNAc...) asparagine glycosylation is present at asparagine 611. Asparagine 644, asparagine 684, asparagine 692, asparagine 697, and asparagine 710 each carry an N-linked (GlcNAc...) asparagine glycan. The helical transmembrane segment at 753–773 threads the bilayer; that stretch reads IIIIVSSVIGGISLLLIAIVV. The Cytoplasmic segment spans residues 774–1124; the sequence is HFLRNPVEPT…CSDLPPPAPP (351 aa). A phosphothreonine mark is found at threonine 808 and threonine 816. The Protein kinase domain occupies 819–1100; the sequence is FHDSYIVGRG…TMREVVLMLI (282 aa). ATP-binding positions include 825 to 833 and lysine 847; that span reads VGRGACGTV. Tyrosine 901 and tyrosine 939 each carry phosphotyrosine. Aspartate 952 (proton acceptor) is an active-site residue. Serine 986 is modified (phosphoserine). Tyrosine 994 and tyrosine 1001 each carry phosphotyrosine. Threonine 1002 carries the phosphothreonine modification.

It belongs to the protein kinase superfamily. Ser/Thr protein kinase family.

The protein localises to the membrane. It catalyses the reaction L-seryl-[protein] + ATP = O-phospho-L-seryl-[protein] + ADP + H(+). The catalysed reaction is L-threonyl-[protein] + ATP = O-phospho-L-threonyl-[protein] + ADP + H(+). The sequence is that of Probable leucine-rich repeat receptor-like protein kinase At2g33170 from Arabidopsis thaliana (Mouse-ear cress).